The chain runs to 242 residues: tRNA pseudouridine synthase A (242 aa).

D51 (nucleophile) is an active-site residue. Residue Y107 participates in substrate binding.

It belongs to the tRNA pseudouridine synthase TruA family. Homodimer.

It catalyses the reaction uridine(38/39/40) in tRNA = pseudouridine(38/39/40) in tRNA. Its function is as follows. Formation of pseudouridine at positions 38, 39 and 40 in the anticodon stem and loop of transfer RNAs. This Helicobacter pylori (strain P12) protein is tRNA pseudouridine synthase A.